Consider the following 436-residue polypeptide: Methylenetetrahydrofolate--tRNA-(uracil-5-)-methyltransferase TrmFO (436 aa).

11 to 16 (GAGLAG) contributes to the FAD binding site.

Belongs to the MnmG family. TrmFO subfamily. FAD serves as cofactor.

The protein localises to the cytoplasm. The enzyme catalyses uridine(54) in tRNA + (6R)-5,10-methylene-5,6,7,8-tetrahydrofolate + NADH + H(+) = 5-methyluridine(54) in tRNA + (6S)-5,6,7,8-tetrahydrofolate + NAD(+). The catalysed reaction is uridine(54) in tRNA + (6R)-5,10-methylene-5,6,7,8-tetrahydrofolate + NADPH + H(+) = 5-methyluridine(54) in tRNA + (6S)-5,6,7,8-tetrahydrofolate + NADP(+). Catalyzes the folate-dependent formation of 5-methyl-uridine at position 54 (M-5-U54) in all tRNAs. This is Methylenetetrahydrofolate--tRNA-(uracil-5-)-methyltransferase TrmFO from Shouchella clausii (strain KSM-K16) (Alkalihalobacillus clausii).